The chain runs to 428 residues: Nocturnin (428 aa).

The N-terminal 72 residues, 1 to 72 (MYQSPRRLCS…PMGNGTSRLY (72 aa)), are a transit peptide targeting the mitochondrion. The segment at 21 to 66 (RRTLVPGPRRTLAPPVLGSRPASPQLQAAASGAARSRPRTVSPMGN) is disordered. Residues 39–55 (SRPASPQLQAAASGAAR) are compositionally biased toward low complexity. Glutamate 192 contributes to the Mg(2+) binding site. Substrate-binding positions include glutamate 192, 216–218 (KPW), asparagine 260, 283–286 (HLKA), and 321–323 (DFN). An interaction with PPARG region spans residues 340–350 (NLNSAYKLLSP). Residue histidine 411 participates in substrate binding.

Belongs to the CCR4/nocturin family. Interacts with PPARG. Requires Mg(2+) as cofactor.

It localises to the cytoplasm. The protein localises to the nucleus. Its subcellular location is the perinuclear region. It is found in the mitochondrion. The enzyme catalyses NADP(+) + H2O = phosphate + NAD(+). The catalysed reaction is NADPH + H2O = phosphate + NADH. Functionally, phosphatase which catalyzes the conversion of NADP(+) to NAD(+) and of NADPH to NADH. Shows a small preference for NADPH over NADP(+). Represses translation and promotes degradation of target mRNA molecules. Plays an important role in post-transcriptional regulation of metabolic genes under circadian control. Exerts a rhythmic post-transcriptional control of genes necessary for metabolic functions including nutrient absorption, glucose/insulin sensitivity, lipid metabolism, adipogenesis, inflammation and osteogenesis. Plays an important role in favoring adipogenesis over osteoblastogenesis and acts as a key regulator of the adipogenesis/osteogenesis balance. Promotes adipogenesis by facilitating PPARG nuclear translocation which activates its transcriptional activity. Regulates circadian expression of NOS2 in the liver and negatively regulates the circadian expression of IGF1 in the bone. Critical for proper development of early embryos. This Rattus norvegicus (Rat) protein is Nocturnin.